Consider the following 330-residue polypeptide: Malate dehydrogenase (330 aa).

Position 13-19 (13-19 (GAAGQIG)) interacts with NAD(+). 2 residues coordinate substrate: Arg-94 and Arg-100. Residues Asn-107, Gln-114, and 131–133 (VGN) each bind NAD(+). Substrate-binding residues include Asn-133 and Arg-164. His-189 serves as the catalytic Proton acceptor.

It belongs to the LDH/MDH superfamily. MDH type 2 family.

It carries out the reaction (S)-malate + NAD(+) = oxaloacetate + NADH + H(+). In terms of biological role, catalyzes the reversible oxidation of malate to oxaloacetate. This is Malate dehydrogenase from Deinococcus deserti (strain DSM 17065 / CIP 109153 / LMG 22923 / VCD115).